The following is a 397-amino-acid chain: Formate-dependent phosphoribosylglycinamide formyltransferase (397 aa).

N(1)-(5-phospho-beta-D-ribosyl)glycinamide is bound by residues 21–22 (EL) and Glu81. Residues Arg113, Lys154, 194-197 (EEFV), and Glu202 contribute to the ATP site. The ATP-grasp domain occupies 118–312 (RFAAEKLKLP…EFQIHVRSAI (195 aa)). The Mg(2+) site is built by Glu271 and Glu283. N(1)-(5-phospho-beta-D-ribosyl)glycinamide-binding positions include Asp290, Lys361, and 368-369 (RR).

This sequence belongs to the PurK/PurT family. In terms of assembly, homodimer.

The catalysed reaction is N(1)-(5-phospho-beta-D-ribosyl)glycinamide + formate + ATP = N(2)-formyl-N(1)-(5-phospho-beta-D-ribosyl)glycinamide + ADP + phosphate + H(+). The protein operates within purine metabolism; IMP biosynthesis via de novo pathway; N(2)-formyl-N(1)-(5-phospho-D-ribosyl)glycinamide from N(1)-(5-phospho-D-ribosyl)glycinamide (formate route): step 1/1. Involved in the de novo purine biosynthesis. Catalyzes the transfer of formate to 5-phospho-ribosyl-glycinamide (GAR), producing 5-phospho-ribosyl-N-formylglycinamide (FGAR). Formate is provided by PurU via hydrolysis of 10-formyl-tetrahydrofolate. The polypeptide is Formate-dependent phosphoribosylglycinamide formyltransferase (Saccharolobus solfataricus (strain ATCC 35092 / DSM 1617 / JCM 11322 / P2) (Sulfolobus solfataricus)).